Here is a 420-residue protein sequence, read N- to C-terminus: Calreticulin (420 aa).

The first 18 residues, 1-18, serve as a signal peptide directing secretion; sequence MKWGVVAVLATLVVAASA. A disulfide bridge links cysteine 106 with cysteine 140. An alpha-D-glucoside-binding residues include tyrosine 110, lysine 112, tyrosine 131, and aspartate 138. 7 tandem repeats follow at residues 194–205, 213–224, 230–241, 248–259, 263–273, 277–287, and 291–301. A 4 X approximate repeats region spans residues 194–259; it reads VASGSLYEDW…DAKKPEDWDD (66 aa). Over residues 210–220 the composition is skewed to basic and acidic residues; that stretch reads TIKDPKASKPE. Residues 210-272 are disordered; it reads TIKDPKASKP…GTWEPPMIPN (63 aa). Over residues 221–230 the composition is skewed to acidic residues; it reads DWDEREEIAD. A 3 X approximate repeats region spans residues 263–301; sequence GTWEPPMIPNPEYKGEWKAKMIKNPAYKGIWVAPDIDNP. Glutamate 321 contributes to the an alpha-D-glucoside binding site. Basic and acidic residues predominate over residues 357–376; that stretch reads EEKAMFDKVKKEEDEKKAKD. Residues 357-420 form a disordered region; that stretch reads EEKAMFDKVK…EEEESGHDEL (64 aa). Composition is skewed to acidic residues over residues 385-398 and 411-420; these read EAAE…EDKE and EEEESGHDEL. The Prevents secretion from ER motif lies at 417 to 420; the sequence is HDEL.

It belongs to the calreticulin family.

It is found in the endoplasmic reticulum lumen. In terms of biological role, molecular calcium-binding chaperone promoting folding, oligomeric assembly and quality control in the ER via the calreticulin/calnexin cycle. This lectin may interact transiently with almost all of the monoglucosylated glycoproteins that are synthesized in the ER. The protein is Calreticulin of Chlamydomonas reinhardtii (Chlamydomonas smithii).